Reading from the N-terminus, the 539-residue chain is Glycine betaine transporter 2 (539 aa).

Transmembrane regions (helical) follow at residues 44-64 (LTNPVFWLSGSFLSLFVLLAL), 85-105 (FGAYWQVLLLLNFLIGLALAF), 129-149 (IVLCTLLAGGGVFWAAAEPIA), 175-195 (FMHWGFLAWAILGCLSSIVLM), 231-251 (CSIIAVAAGTIGPIGFLGLQI), 265-285 (FITQSMVIVAAIVMYTLSALS), 299-319 (IILSVLLIGYILFFGPTSFII), 348-368 (WWTVFFWGWFIGYGPMMAIFI), 380-400 (LILSISIAAPLITCFWFSIVG), 426-446 (VLLAITGELPFPMIISVLFLI), 480-500 (FWGLMMGVVAIALISMGSGGI), and 503-523 (LQSFIVITAVPVSFILLPSIL).

This sequence belongs to the BCCT transporter (TC 2.A.15) family.

The protein localises to the cell inner membrane. Its function is as follows. Involved in the uptake of the osmoprotectant glycine betaine. This Vibrio parahaemolyticus serotype O3:K6 (strain RIMD 2210633) protein is Glycine betaine transporter 2.